Reading from the N-terminus, the 1199-residue chain is Transcription initiation factor TFIID subunit 2 (1199 aa).

Disordered stretches follow at residues 1 to 23 (MPLT…FESP), 1067 to 1102 (RPST…TKPQ), and 1136 to 1199 (KEST…SLSD). Over residues 1093–1102 (CDSTPTTKPQ) the composition is skewed to polar residues. The span at 1144–1171 (SDHHHHHHHEHKKKKKKHKHKHKHKHKH) shows a compositional bias: basic residues. The segment covering 1182 to 1199 (TFSSPASGRSIRSPSLSD) has biased composition (polar residues). A phosphoserine mark is found at serine 1185, serine 1188, serine 1194, serine 1196, and serine 1198.

This sequence belongs to the TAF2 family. Component of the TFIID basal transcription factor complex, composed of TATA-box-binding protein TBP, and a number of TBP-associated factors (TAFs), including TAF1, TAF2, TAF3, TAF4, TAF5, TAF6, TAF7, TAF8, TAF9, TAF10, TAF11, TAF12 and TAF13. Interacts with TAF2C1. Component of the TFTC-HAT complex. As to expression, expressed in all tissues tested.

It localises to the nucleus. The TFIID basal transcription factor complex plays a major role in the initiation of RNA polymerase II (Pol II)-dependent transcription. TFIID recognizes and binds promoters with or without a TATA box via its subunit TBP, a TATA-box-binding protein, and promotes assembly of the pre-initiation complex (PIC). The TFIID complex consists of TBP and TBP-associated factors (TAFs), including TAF1, TAF2, TAF3, TAF4, TAF5, TAF6, TAF7, TAF8, TAF9, TAF10, TAF11, TAF12 and TAF13. TAF2 forms a promoter DNA binding subcomplex of TFIID, together with TAF7 and TAF1. The polypeptide is Transcription initiation factor TFIID subunit 2 (TAF2) (Homo sapiens (Human)).